The sequence spans 150 residues: UPF0178 protein AZOSEA36080 (150 aa).

It belongs to the UPF0178 family.

The sequence is that of UPF0178 protein AZOSEA36080 from Aromatoleum aromaticum (strain DSM 19018 / LMG 30748 / EbN1) (Azoarcus sp. (strain EbN1)).